Here is a 727-residue protein sequence, read N- to C-terminus: Glucans biosynthesis glucosyltransferase H (727 aa).

Residues 18-41 (SAMPNERPGAMEPQKLSKMPEGFP) are disordered. The next 7 membrane-spanning stretches (helical) occupy residues 58 to 78 (FLVV…MGAV), 97 to 117 (VNFC…LILL), 278 to 298 (LQQF…GWWV), 408 to 428 (IMAY…LMLA), 460 to 480 (LFYI…LLLL), 496 to 516 (IFSV…MMFI), and 572 to 592 (LLAW…ISAW).

It belongs to the glycosyltransferase 2 family. OpgH subfamily.

It localises to the cell inner membrane. Its pathway is glycan metabolism; osmoregulated periplasmic glucan (OPG) biosynthesis. Functionally, involved in the biosynthesis of osmoregulated periplasmic glucans (OPGs). The protein is Glucans biosynthesis glucosyltransferase H of Shewanella baltica (strain OS155 / ATCC BAA-1091).